The sequence spans 231 residues: 7-cyano-7-deazaguanine synthase (231 aa).

ATP is bound at residue 8–18 (FSGGQDSTTCL). Residues Cys188, Cys197, Cys200, and Cys203 each contribute to the Zn(2+) site.

It belongs to the QueC family. The cofactor is Zn(2+).

It catalyses the reaction 7-carboxy-7-deazaguanine + NH4(+) + ATP = 7-cyano-7-deazaguanine + ADP + phosphate + H2O + H(+). Its pathway is purine metabolism; 7-cyano-7-deazaguanine biosynthesis. Catalyzes the ATP-dependent conversion of 7-carboxy-7-deazaguanine (CDG) to 7-cyano-7-deazaguanine (preQ(0)). This is 7-cyano-7-deazaguanine synthase from Escherichia coli O157:H7.